Reading from the N-terminus, the 566-residue chain is Cytochrome c oxidase subunit 1 (566 aa).

The next 7 membrane-spanning stretches (helical) occupy residues 29 to 49, 97 to 117, 141 to 161, 189 to 209, 227 to 247, 278 to 298, and 310 to 330; these read IGVL…AFTV, VMIT…ALFG, LSYW…FAPG, LAIF…INMI, LFAW…PVLA, ILWF…FGIV, and IFGY…GFVV. His-102 is a Fe(II)-heme a binding site. Cu cation is bound by residues His-284 and Tyr-288. The segment at residues 284 to 288 is a cross-link (1'-histidyl-3'-tyrosine (His-Tyr)); sequence HPEVY. Cu cation is bound by residues His-333 and His-334. 2 consecutive transmembrane segments (helical) span residues 348–368 and 381–401; these read FMMA…SWIA and MLWA…GIVL. Residue His-419 coordinates heme a3. 3 helical membrane-spanning segments follow: residues 420 to 440, 455 to 475, and 499 to 519; these read FHYV…YFWI, LHFW…HFLG, and LGAF…FYTL. Residue His-421 coordinates Fe(II)-heme a. The disordered stretch occupies residues 543 to 566; sequence TSPPPEHTFEQLPKREDWERAPAH. Residues 549–566 are compositionally biased toward basic and acidic residues; sequence HTFEQLPKREDWERAPAH.

The protein belongs to the heme-copper respiratory oxidase family. Cu(2+) serves as cofactor. It depends on heme as a cofactor.

The protein localises to the cell membrane. The catalysed reaction is 4 Fe(II)-[cytochrome c] + O2 + 8 H(+)(in) = 4 Fe(III)-[cytochrome c] + 2 H2O + 4 H(+)(out). It participates in energy metabolism; oxidative phosphorylation. Functionally, cytochrome c oxidase is the component of the respiratory chain that catalyzes the reduction of oxygen to water. Subunits 1-3 form the functional core of the enzyme complex. Co I is the catalytic subunit of the enzyme. Electrons originating in cytochrome c are transferred via the copper A center of subunit 2 and heme a of subunit 1 to the bimetallic center formed by heme a3 and copper B. This cytochrome c oxidase shows proton pump activity across the membrane in addition to the electron transfer. The protein is Cytochrome c oxidase subunit 1 (ctaD) of Cereibacter sphaeroides (Rhodobacter sphaeroides).